The chain runs to 118 residues: Protein YLR162W (118 aa).

Over residues M1–S20 the composition is skewed to polar residues. Residues M1–P26 form a disordered region. A helical transmembrane segment spans residues L38–A58.

The protein localises to the membrane. Its function is as follows. Overexpression confers resistance to the antimicrobial peptide MiAMP1. The chain is Protein YLR162W from Saccharomyces cerevisiae (strain ATCC 204508 / S288c) (Baker's yeast).